A 735-amino-acid polypeptide reads, in one-letter code: DNA replication licensing factor mcm5-B (735 aa).

An MCM domain is found at 332 to 538 (IYETVAKSIA…RDMTLAKHVM (207 aa)). Position 372 (Arg372) interacts with ADP. An Arginine finger motif is present at residues 513-516 (SRFD).

This sequence belongs to the MCM family. Component of the mcm2-7 complex (RLF-M). The complex forms a toroidal hexameric ring with the proposed subunit order mcm2-mcm6-mcm4-mcm7-mcm3-mcm5. The heterodimer of mmcm3/mcm5 interacts with mcm4, mmcm6, mcm7 and weakly with mcm2. Component of the CMG helicase complex, composed of the mcm2-7 complex, the GINS complex and cdc45.

Its subcellular location is the nucleus. The protein resides in the chromosome. The catalysed reaction is ATP + H2O = ADP + phosphate + H(+). In terms of biological role, acts as a component of the MCM2-7 complex (MCM complex) which is the replicative helicase essential for 'once per cell cycle' DNA replication initiation and elongation in eukaryotic cells. Core component of CDC45-MCM-GINS (CMG) helicase, the molecular machine that unwinds template DNA during replication, and around which the replisome is built. The active ATPase sites in the MCM2-7 ring are formed through the interaction surfaces of two neighboring subunits such that a critical structure of a conserved arginine finger motif is provided in trans relative to the ATP-binding site of the Walker A box of the adjacent subunit. The six ATPase active sites, however, are likely to contribute differentially to the complex helicase activity. This Xenopus laevis (African clawed frog) protein is DNA replication licensing factor mcm5-B (mcm5-b).